The following is a 362-amino-acid chain: DNA polymerase IV (362 aa).

The region spanning 6 to 187 (IIHVDMDAFY…LPVSSFHGVG (182 aa)) is the UmuC domain. Positions 10 and 105 each coordinate Mg(2+). Residue glutamate 106 is part of the active site.

This sequence belongs to the DNA polymerase type-Y family. As to quaternary structure, monomer. It depends on Mg(2+) as a cofactor.

Its subcellular location is the cytoplasm. It catalyses the reaction DNA(n) + a 2'-deoxyribonucleoside 5'-triphosphate = DNA(n+1) + diphosphate. In terms of biological role, poorly processive, error-prone DNA polymerase involved in untargeted mutagenesis. Copies undamaged DNA at stalled replication forks, which arise in vivo from mismatched or misaligned primer ends. These misaligned primers can be extended by PolIV. Exhibits no 3'-5' exonuclease (proofreading) activity. May be involved in translesional synthesis, in conjunction with the beta clamp from PolIII. The polypeptide is DNA polymerase IV (Leptospira interrogans serogroup Icterohaemorrhagiae serovar copenhageni (strain Fiocruz L1-130)).